Here is a 156-residue protein sequence, read N- to C-terminus: Small ribosomal subunit protein uS7 (156 aa).

The protein belongs to the universal ribosomal protein uS7 family. In terms of assembly, part of the 30S ribosomal subunit. Contacts proteins S9 and S11.

In terms of biological role, one of the primary rRNA binding proteins, it binds directly to 16S rRNA where it nucleates assembly of the head domain of the 30S subunit. Is located at the subunit interface close to the decoding center, probably blocks exit of the E-site tRNA. The chain is Small ribosomal subunit protein uS7 from Marinobacter nauticus (strain ATCC 700491 / DSM 11845 / VT8) (Marinobacter aquaeolei).